A 335-amino-acid polypeptide reads, in one-letter code: UPF0353 protein MAP_1207 (335 aa).

Transmembrane regions (helical) follow at residues 18-38 (WFFL…LMQL) and 67-87 (LPAI…AGPT). The 197-residue stretch at 98–294 (VVMLVIDVSQ…QELKSVYATL (197 aa)) folds into the VWFA domain. The helical transmembrane segment at 309 to 329 (VGWVRLGALVLALAALTALLI) threads the bilayer.

Belongs to the UPF0353 family.

It localises to the cell membrane. In Mycolicibacterium paratuberculosis (strain ATCC BAA-968 / K-10) (Mycobacterium paratuberculosis), this protein is UPF0353 protein MAP_1207.